The chain runs to 287 residues: Undecaprenyl-diphosphatase (287 aa).

7 consecutive transmembrane segments (helical) span residues 50 to 70, 97 to 117, 131 to 151, 160 to 180, 206 to 226, 234 to 254, and 264 to 284; these read PGVSVTAAIQLGSIAAVIAYF, LGFAMVVGTLPILVIGLGIKF, IPSIAIVSIVMALLLALAEQV, VVLGRDGLLVGLAQALALLPG, FLLGIPGITIAGLVELKDALA, LPLLVGIGSAAVVSWLAIDWL, and WLFVAYRLVFGLLLLVWWGVY.

The protein belongs to the UppP family.

It is found in the cell inner membrane. The enzyme catalyses di-trans,octa-cis-undecaprenyl diphosphate + H2O = di-trans,octa-cis-undecaprenyl phosphate + phosphate + H(+). In terms of biological role, catalyzes the dephosphorylation of undecaprenyl diphosphate (UPP). Confers resistance to bacitracin. The protein is Undecaprenyl-diphosphatase of Synechococcus sp. (strain CC9605).